Consider the following 545-residue polypeptide: Glucose-6-phosphate isomerase (545 aa).

Glutamate 351 acts as the Proton donor in catalysis. Active-site residues include histidine 382 and lysine 510.

It belongs to the GPI family.

It localises to the cytoplasm. The catalysed reaction is alpha-D-glucose 6-phosphate = beta-D-fructose 6-phosphate. The protein operates within carbohydrate biosynthesis; gluconeogenesis. Its pathway is carbohydrate degradation; glycolysis; D-glyceraldehyde 3-phosphate and glycerone phosphate from D-glucose: step 2/4. In terms of biological role, catalyzes the reversible isomerization of glucose-6-phosphate to fructose-6-phosphate. The chain is Glucose-6-phosphate isomerase from Helicobacter acinonychis (strain Sheeba).